The primary structure comprises 290 residues: MDYKCFKGKHANIVIEIISLLEKGVKKAQEILEKPDAGSYTKLENSSGDTPIKADLALDKFLEENFLSLENIKSVFSEEKETPVTKENGSYLIAYDPLDGSSVMEANFLVGTIIGIYEKDYKAQNLAASLYVVFGHKIELVVALEEVYRYSFYQNKFHFIETIVLENKGKIVASGGNQKDFSLGLKKALEGFFAENYRLRYSGSMVADVHHVLVKKGGMFSYPQKKLRKLFEVFPLALMVEKAKGEAFYFDKGVKKRLLEQSVENYHEKSECYLASQHEAHILEKYLKGE.

Mg(2+) contacts are provided by E78, D96, L98, and D99. Residues 99–102 (DGSS), Y201, and K226 each bind substrate. E232 provides a ligand contact to Mg(2+).

It belongs to the FBPase class 1 family. As to quaternary structure, homotetramer. Mg(2+) is required as a cofactor.

Its subcellular location is the cytoplasm. It carries out the reaction beta-D-fructose 1,6-bisphosphate + H2O = beta-D-fructose 6-phosphate + phosphate. The protein operates within carbohydrate biosynthesis; gluconeogenesis. The polypeptide is Fructose-1,6-bisphosphatase class 1 (Helicobacter pylori (strain ATCC 700392 / 26695) (Campylobacter pylori)).